We begin with the raw amino-acid sequence, 296 residues long: Undecaprenyl-diphosphatase (296 aa).

7 helical membrane passes run Ser48–Phe68, Leu104–Asp124, Leu131–Ala151, Ile167–Phe187, Ser208–Val228, Ser237–Ile257, and Phe272–Ile292.

The protein belongs to the UppP family.

The protein resides in the cell membrane. The catalysed reaction is di-trans,octa-cis-undecaprenyl diphosphate + H2O = di-trans,octa-cis-undecaprenyl phosphate + phosphate + H(+). Functionally, catalyzes the dephosphorylation of undecaprenyl diphosphate (UPP). Confers resistance to bacitracin. This is Undecaprenyl-diphosphatase from Staphylococcus carnosus (strain TM300).